We begin with the raw amino-acid sequence, 337 residues long: Primase homolog protein (337 aa).

Positions 205–304 constitute a Toprim domain; that stretch reads SEIIIVEGEP…WLVKWPKKSE (100 aa). Glu211, Asp273, and Asp275 together coordinate Mg(2+).

Mg(2+) is required as a cofactor.

May act as a DNA primase. This is Primase homolog protein from Arabidopsis thaliana (Mouse-ear cress).